The following is a 749-amino-acid chain: Transcription factor RFX3 (749 aa).

The RFX-type winged-helix DNA-binding region spans 183-258; sequence HLQWLLDNYE…YHYYGIRVKP (76 aa). The segment at 663 to 699 is disordered; that stretch reads VSPGNLDKDEGSEVESEMDEELDDSSEPQAKREKTEL. A compositionally biased stretch (acidic residues) spans 674–688; that stretch reads SEVESEMDEELDDSS.

This sequence belongs to the RFX family. As to quaternary structure, heterodimer; heterodimerizes with RFX1 and RFX2, and RFX6.

It is found in the nucleus. Its function is as follows. Transcription factor required for ciliogenesis and islet cell differentiation during endocrine pancreas development. Essential for the differentiation of nodal monocilia and left-right asymmetry specification during embryogenesis. Required for the biogenesis of motile cilia by governing growth and beating efficiency of motile cells. Also required for ciliated ependymal cell differentiation. Regulates the expression of genes involved in ciliary assembly (DYNC2LI1, FOXJ1 and BBS4) and genes involved in ciliary motility (DNAH11, DNAH9 and DNAH5). Together with RFX6, participates in the differentiation of 4 of the 5 islet cell types during endocrine pancreas development, with the exception of pancreatic PP (polypeptide-producing) cells. Regulates transcription by forming a heterodimer with another RFX protein and binding to the X-box in the promoter of target genes. Represses transcription of MAP1A in non-neuronal cells but not in neuronal cells. The polypeptide is Transcription factor RFX3 (RFX3) (Homo sapiens (Human)).